The primary structure comprises 1849 residues: Mitogen-activated protein kinase kinase kinase mkh1 (1849 aa).

In terms of domain architecture, Protein kinase spans W1556–C1825. ATP-binding positions include I1562 to V1570 and K1585. The Proton acceptor role is filled by D1686.

The protein belongs to the protein kinase superfamily. STE Ser/Thr protein kinase family. MAP kinase kinase kinase subfamily.

It catalyses the reaction L-seryl-[protein] + ATP = O-phospho-L-seryl-[protein] + ADP + H(+). The enzyme catalyses L-threonyl-[protein] + ATP = O-phospho-L-threonyl-[protein] + ADP + H(+). In terms of biological role, mitogen-activated protein kinase kinase kinase, part of the mkh1-mkk1-spm1 MAPK cascade that regulates vegetative growth, conidial formation, colony surface hydrophobicity, osmotic stress, cell wall integrity maintenance, carbon and nitrogen source utilization, chitin distribution, septa formation, and pathogenicity. The protein is Mitogen-activated protein kinase kinase kinase mkh1 of Cytospora mali (Apple Valsa canker fungus).